The chain runs to 212 residues: 3-isopropylmalate dehydratase small subunit (212 aa).

This sequence belongs to the LeuD family. LeuD type 1 subfamily. Heterodimer of LeuC and LeuD.

It carries out the reaction (2R,3S)-3-isopropylmalate = (2S)-2-isopropylmalate. It participates in amino-acid biosynthesis; L-leucine biosynthesis; L-leucine from 3-methyl-2-oxobutanoate: step 2/4. Functionally, catalyzes the isomerization between 2-isopropylmalate and 3-isopropylmalate, via the formation of 2-isopropylmaleate. The sequence is that of 3-isopropylmalate dehydratase small subunit from Methylococcus capsulatus (strain ATCC 33009 / NCIMB 11132 / Bath).